Reading from the N-terminus, the 211-residue chain is PITH domain-containing protein CG6153 (211 aa).

Positions 20–192 (DHALEMGIEY…GVTICNYESR (173 aa)) constitute a PITH domain.

It belongs to the PITHD1 family.

The protein is PITH domain-containing protein CG6153 of Drosophila melanogaster (Fruit fly).